The sequence spans 317 residues: Glycerol-3-phosphate dehydrogenase [NAD(P)+] (317 aa).

NADPH is bound by residues Ser14, Phe15, Arg35, and Lys109. Positions 109 and 137 each coordinate sn-glycerol 3-phosphate. Ala141 lines the NADPH pocket. The sn-glycerol 3-phosphate site is built by Lys192, Asp248, Ser258, Arg259, and Asn260. The active-site Proton acceptor is Lys192. Arg259 contacts NADPH. Positions 283 and 285 each coordinate NADPH.

This sequence belongs to the NAD-dependent glycerol-3-phosphate dehydrogenase family.

It localises to the cytoplasm. It carries out the reaction sn-glycerol 3-phosphate + NAD(+) = dihydroxyacetone phosphate + NADH + H(+). The catalysed reaction is sn-glycerol 3-phosphate + NADP(+) = dihydroxyacetone phosphate + NADPH + H(+). It functions in the pathway membrane lipid metabolism; glycerophospholipid metabolism. Functionally, catalyzes the reduction of the glycolytic intermediate dihydroxyacetone phosphate (DHAP) to sn-glycerol 3-phosphate (G3P), the key precursor for phospholipid synthesis. The sequence is that of Glycerol-3-phosphate dehydrogenase [NAD(P)+] from Rickettsia akari (strain Hartford).